Here is a 433-residue protein sequence, read N- to C-terminus: MLPAGCSRRLVAELQGALDACAQRQLQLEQSLRVCRRLLHAWEPTGTRALKPPPGPETNGEDPLPACTPSPQDLKELEFLTQALEKAVRVRRGITKAGERDKAPSLKSRSIVTSSGTTASAPPHSPGQAGGHASDTRPTKGLRQTTVPAKGHPERRLLSVGDGTRVGMGARTPRPGAGLRDQQMAPSAAPQAPEAFTLKEKGHLLRLPAAFRKAASQNSSLWAQLSSTQTSDSTDAAAAKTQFLQNMQTASGGPQPRLSAVEVEAEAGRLRKACSLLRLRMREELSAAPMDWMQEYRCLLTLEGLQAMVGQCLHRLQELRAAVAEQPPRPCPVGRPPGASPSCGGRAEPAWSPQLLVYSSTQELQTLAALKLRVAVLDQQIHLEKVLMAELLPLVSAAQPQGPPWLALCRAVHSLLCEGGARVLTILRDEPAV.

Disordered stretches follow at residues 45-69 (TGTRALKPPPGPETNGEDPLPACTP), 95-169 (TKAG…VGMG), and 326-345 (QPPRPCPVGRPPGASPSCGG). Over residues 107–120 (KSRSIVTSSGTTAS) the composition is skewed to polar residues. S159 carries the post-translational modification Phosphoserine. Pro residues predominate over residues 327 to 339 (PPRPCPVGRPPGA).

As to quaternary structure, interacts with TEDC1. Found in a complex with TEDC1, TEDC2, TUBE1 and TUBD1.

It localises to the cell projection. The protein resides in the cilium. Its subcellular location is the cytoplasm. The protein localises to the cytoskeleton. It is found in the microtubule organizing center. It localises to the centrosome. The protein resides in the centriole. Functionally, acts as a positive regulator of ciliary hedgehog signaling. Required for centriole stability. The sequence is that of Tubulin epsilon and delta complex protein 2 from Homo sapiens (Human).